The following is a 435-amino-acid chain: MLLPWATSAPGLAWGPLVLGLFGLLAASQPQAVPPYASENQTCRDQEKEYYEPQHRICCSRCPPGTYVSAKCSRIRDTVCATCAENSYNEHWNYLTICQLCRPCDPVMGLEEIAPCTSKRKTQCRCQPGMFCAAWALECTHCELLSDCPPGTEAELKDEVGKGNNHCVPCKAGHFQNTSSPSARCQPHTRCENQGLVEAAPGTAQSDTTCKNPLEPLPPEMSGTMLMLAVLLPLAFFLLLATVFSCIWKSHPSLCRKLGSLLKRRPQGEGPNPVAGSWEPPKAHPYFPDLVQPLLPISGDVSPVSTGLPAAPVLEAGVPQQQSPLDLTREPQLEPGEQSQVAHGTNGIHVTGGSMTITGNIYIYNGPVLGGPPGPGDLPATPEPPYPIPEEGDPGPPGLSTPHQEDGKAWHLAETEHCGATPSNRGPRNQFITHD.

Positions 1–30 (MLLPWATSAPGLAWGPLVLGLFGLLAASQP) are cleaved as a signal peptide. Over 31-227 (QAVPPYASEN…PPEMSGTMLM (197 aa)) the chain is Extracellular. Residue Asn40 is glycosylated (N-linked (GlcNAc...) asparagine). TNFR-Cys repeat units follow at residues 42–81 (TCRDQEKEYYEPQHRICCSRCPPGTYVSAKCSRIRDTVCA), 82–124 (TCAE…KTQC), 125–168 (RCQP…NHCV), and 169–211 (PCKA…TTCK). 10 disulfide bridges follow: Cys43–Cys58, Cys59–Cys72, Cys62–Cys80, Cys83–Cys98, Cys101–Cys116, Cys104–Cys124, Cys126–Cys132, Cys139–Cys148, Cys142–Cys167, and Cys170–Cys185. N-linked (GlcNAc...) asparagine glycosylation occurs at Asn177. Residues 228–248 (LAVLLPLAFFLLLATVFSCIW) form a helical membrane-spanning segment. Over 249–435 (KSHPSLCRKL…GPRNQFITHD (187 aa)) the chain is Cytoplasmic. Ser323 is subject to Phosphoserine. Over residues 373–399 (PGPGDLPATPEPPYPIPEEGDPGPPGL) the composition is skewed to pro residues. Residues 373-435 (PGPGDLPATP…GPRNQFITHD (63 aa)) form a disordered region. The span at 403-417 (HQEDGKAWHLAETEH) shows a compositional bias: basic and acidic residues. The span at 421–435 (TPSNRGPRNQFITHD) shows a compositional bias: polar residues.

Self-associates; dimerization and trimerization are promoted by lymphotoxin (LTA(1)-LTB(2)). Associates with TRAF3. Associates with TRAF4. Associates with TRAF5. Interacts with Aedes aegypti lymphotoxin beta receptor inhibitor; the interaction reduces dimerization and trimerization of LTBR induced by lymphotoxin (LTA(1)-LTB(2)). In terms of assembly, (Microbial infection) Interacts with HCV core protein.

It is found in the membrane. Its function is as follows. Receptor for the heterotrimeric lymphotoxin containing LTA and LTB, and for TNFS14/LIGHT. Activates NF-kappa-B signaling pathway upon stimulation with lymphotoxin (LTA(1)-LTB(2)). Promotes apoptosis via TRAF3 and TRAF5. May play a role in the development of lymphoid organs. In Homo sapiens (Human), this protein is Tumor necrosis factor receptor superfamily member 3 (LTBR).